Here is a 281-residue protein sequence, read N- to C-terminus: 2-hydroxymuconate semialdehyde hydrolase (281 aa).

Residues phenylalanine 30–serine 55 are disordered. The 231-residue stretch at proline 31–histidine 261 folds into the AB hydrolase-1 domain. Active-site residues include serine 106, aspartate 227, and histidine 255.

It belongs to the DmpD/TodF/XylF esterase family.

It catalyses the reaction (2Z,4E)-2-hydroxy-6-oxohexa-2,4-dienoate + H2O = 2-oxopent-4-enoate + formate + H(+). Its pathway is aromatic compound metabolism; benzoate degradation via hydroxylation. Functionally, catalyzes the conversion of 2-hydroxymuconate semialdehyde to 2-hydroxypent-2,4-dienoate. In Pseudomonas putida (Arthrobacter siderocapsulatus), this protein is 2-hydroxymuconate semialdehyde hydrolase (xylF).